Here is a 508-residue protein sequence, read N- to C-terminus: Photosystem II CP47 reaction center protein (508 aa).

6 helical membrane-spanning segments follow: residues 21–36 (SVHI…WAGS), 101–115 (IVFS…IWHW), 140–156 (GIHL…FGAF), 203–218 (IAAG…FHLS), 237–252 (VLSS…AFVV), and 457–472 (SFAL…HGAR).

Belongs to the PsbB/PsbC family. PsbB subfamily. PSII is composed of 1 copy each of membrane proteins PsbA, PsbB, PsbC, PsbD, PsbE, PsbF, PsbH, PsbI, PsbJ, PsbK, PsbL, PsbM, PsbT, PsbX, PsbY, PsbZ, Psb30/Ycf12, at least 3 peripheral proteins of the oxygen-evolving complex and a large number of cofactors. It forms dimeric complexes. Binds multiple chlorophylls. PSII binds additional chlorophylls, carotenoids and specific lipids. is required as a cofactor.

Its subcellular location is the plastid. The protein localises to the chloroplast thylakoid membrane. In terms of biological role, one of the components of the core complex of photosystem II (PSII). It binds chlorophyll and helps catalyze the primary light-induced photochemical processes of PSII. PSII is a light-driven water:plastoquinone oxidoreductase, using light energy to abstract electrons from H(2)O, generating O(2) and a proton gradient subsequently used for ATP formation. In Lactuca sativa (Garden lettuce), this protein is Photosystem II CP47 reaction center protein.